The following is a 238-amino-acid chain: ATP synthase subunit a (238 aa).

5 helical membrane passes run 18-38 (GTTM…TVIG), 76-96 (FIVL…MGIP), 117-137 (VLTL…GIMV), 173-193 (LFGN…LGTT), and 208-230 (WQAF…AMVY).

It belongs to the ATPase A chain family. In terms of assembly, F-type ATPases have 2 components, CF(1) - the catalytic core - and CF(0) - the membrane proton channel. CF(1) has five subunits: alpha(3), beta(3), gamma(1), delta(1), epsilon(1). CF(0) has three main subunits: a(1), b(2) and c(9-12). The alpha and beta chains form an alternating ring which encloses part of the gamma chain. CF(1) is attached to CF(0) by a central stalk formed by the gamma and epsilon chains, while a peripheral stalk is formed by the delta and b chains.

It localises to the cell membrane. Key component of the proton channel; it plays a direct role in the translocation of protons across the membrane. The protein is ATP synthase subunit a of Shouchella clausii (strain KSM-K16) (Alkalihalobacillus clausii).